We begin with the raw amino-acid sequence, 348 residues long: Fructose-1,6-bisphosphatase class 1 (348 aa).

Mg(2+)-binding residues include glutamate 92, aspartate 111, leucine 113, and aspartate 114. Substrate-binding positions include 114 to 117 (DGSS) and asparagine 204. A Mg(2+)-binding site is contributed by glutamate 276.

It belongs to the FBPase class 1 family. Homotetramer. The cofactor is Mg(2+).

Its subcellular location is the cytoplasm. The enzyme catalyses beta-D-fructose 1,6-bisphosphate + H2O = beta-D-fructose 6-phosphate + phosphate. Its pathway is carbohydrate biosynthesis; gluconeogenesis. The protein is Fructose-1,6-bisphosphatase class 1 of Methylorubrum populi (strain ATCC BAA-705 / NCIMB 13946 / BJ001) (Methylobacterium populi).